Consider the following 353-residue polypeptide: S-adenosylmethionine decarboxylase proenzyme (353 aa).

Catalysis depends on residues E9 and E12. S69 acts as the Schiff-base intermediate with substrate; via pyruvic acid in catalysis. Pyruvic acid (Ser); by autocatalysis is present on S69. C83 functions as the Proton donor; for catalytic activity in the catalytic mechanism. Residues S232 and H245 each act as proton acceptor; for processing activity in the active site.

It belongs to the eukaryotic AdoMetDC family. It depends on pyruvate as a cofactor. Is synthesized initially as an inactive proenzyme. Formation of the active enzyme involves a self-maturation process in which the active site pyruvoyl group is generated from an internal serine residue via an autocatalytic post-translational modification. Two non-identical subunits are generated from the proenzyme in this reaction, and the pyruvate is formed at the N-terminus of the alpha chain, which is derived from the carboxyl end of the proenzyme. The post-translation cleavage follows an unusual pathway, termed non-hydrolytic serinolysis, in which the side chain hydroxyl group of the serine supplies its oxygen atom to form the C-terminus of the beta chain, while the remainder of the serine residue undergoes an oxidative deamination to produce ammonia and the pyruvoyl group blocking the N-terminus of the alpha chain.

The enzyme catalyses S-adenosyl-L-methionine + H(+) = S-adenosyl 3-(methylsulfanyl)propylamine + CO2. The protein operates within amine and polyamine biosynthesis; S-adenosylmethioninamine biosynthesis; S-adenosylmethioninamine from S-adenosyl-L-methionine: step 1/1. This Vicia faba (Broad bean) protein is S-adenosylmethionine decarboxylase proenzyme (SAMDC).